Consider the following 357-residue polypeptide: Phosphoserine aminotransferase (357 aa).

Arg-41 serves as a coordination point for L-glutamate. Pyridoxal 5'-phosphate is bound by residues 76 to 77 (GT), Trp-102, Thr-152, Asp-171, and Gln-194. Lys-195 carries the N6-(pyridoxal phosphate)lysine modification. 235–236 (NT) contributes to the pyridoxal 5'-phosphate binding site.

The protein belongs to the class-V pyridoxal-phosphate-dependent aminotransferase family. SerC subfamily. Homodimer. It depends on pyridoxal 5'-phosphate as a cofactor.

It localises to the cytoplasm. The enzyme catalyses O-phospho-L-serine + 2-oxoglutarate = 3-phosphooxypyruvate + L-glutamate. It carries out the reaction 4-(phosphooxy)-L-threonine + 2-oxoglutarate = (R)-3-hydroxy-2-oxo-4-phosphooxybutanoate + L-glutamate. Its pathway is amino-acid biosynthesis; L-serine biosynthesis; L-serine from 3-phospho-D-glycerate: step 2/3. Its function is as follows. Catalyzes the reversible conversion of 3-phosphohydroxypyruvate to phosphoserine and of 3-hydroxy-2-oxo-4-phosphonooxybutanoate to phosphohydroxythreonine. This chain is Phosphoserine aminotransferase, found in Limosilactobacillus fermentum (strain NBRC 3956 / LMG 18251) (Lactobacillus fermentum).